Consider the following 305-residue polypeptide: UDP-3-O-acyl-N-acetylglucosamine deacetylase (305 aa).

His-79, His-238, and Asp-242 together coordinate Zn(2+). The Proton donor role is filled by His-265.

Belongs to the LpxC family. Zn(2+) is required as a cofactor.

The enzyme catalyses a UDP-3-O-[(3R)-3-hydroxyacyl]-N-acetyl-alpha-D-glucosamine + H2O = a UDP-3-O-[(3R)-3-hydroxyacyl]-alpha-D-glucosamine + acetate. It functions in the pathway glycolipid biosynthesis; lipid IV(A) biosynthesis; lipid IV(A) from (3R)-3-hydroxytetradecanoyl-[acyl-carrier-protein] and UDP-N-acetyl-alpha-D-glucosamine: step 2/6. Functionally, catalyzes the hydrolysis of UDP-3-O-myristoyl-N-acetylglucosamine to form UDP-3-O-myristoylglucosamine and acetate, the committed step in lipid A biosynthesis. The chain is UDP-3-O-acyl-N-acetylglucosamine deacetylase from Salmonella arizonae (strain ATCC BAA-731 / CDC346-86 / RSK2980).